Consider the following 780-residue polypeptide: Phosphoenolpyruvate synthase (780 aa).

H409 acts as the Tele-phosphohistidine intermediate in catalysis. Residues R499, R566, E668, G689, S690, N691, and D692 each contribute to the substrate site. Mg(2+) is bound at residue E668. D692 provides a ligand contact to Mg(2+).

Belongs to the PEP-utilizing enzyme family. Mg(2+) serves as cofactor.

The enzyme catalyses pyruvate + ATP + H2O = phosphoenolpyruvate + AMP + phosphate + 2 H(+). It functions in the pathway carbohydrate biosynthesis; gluconeogenesis. Catalyzes the phosphorylation of pyruvate to phosphoenolpyruvate. The chain is Phosphoenolpyruvate synthase (ppsA) from Deinococcus radiodurans (strain ATCC 13939 / DSM 20539 / JCM 16871 / CCUG 27074 / LMG 4051 / NBRC 15346 / NCIMB 9279 / VKM B-1422 / R1).